The chain runs to 354 residues: UPF0496 protein At4g34330 (354 aa).

A run of 2 helical transmembrane segments spans residues 200–220 (IIFM…ATMA) and 222–242 (PHVA…GKWI). The stretch at 270–341 (AVQDLNNIKD…CSTDIRRART (72 aa)) forms a coiled coil.

Belongs to the UPF0496 family.

Its subcellular location is the membrane. The chain is UPF0496 protein At4g34330 from Arabidopsis thaliana (Mouse-ear cress).